The primary structure comprises 196 residues: uncharacterized protein (196 aa).

The region spanning 51–164 (VAEHSLLVEE…DRIFGKPDPV (114 aa)) is the HD domain.

This is an uncharacterized protein from Rhodobacter capsulatus (strain ATCC BAA-309 / NBRC 16581 / SB1003).